The sequence spans 384 residues: MDAALLLNVEGVKKTILHGGTGELPNFITGSRVIFHFRTMKCDEERTVIDDSRQVGQPMHIIIGNMFKLEVWEILLTSMRVHEVAEFWCDTIHTGVYPILSRSLRQMAQGKDPTEWHVHTCGLANMFAYHTLGYEDLDELQKEPQPLVFVIELLQVDAPSDYQRETWNLSNHEKMKAVPVLHGEGNRLFKLGRYEEASSKYQEAIICLRNLQTKEKPWEVQWLKLEKMINTLILNYCQCLLKKEEYYEVLEHTSDILRHHPGIVKAYYVRARAHAEVWNEAEAKADLRKVLELEPSMQKAVRRELRLLENRMAEKQEEERLRCRNMLSQGATQPPAEPPTEPPAQSSTEPPAEPPPAPSAELSAGPPAETATEPPPSPGHSLQH.

The 93-residue stretch at 53 to 145 (RQVGQPMHII…DLDELQKEPQ (93 aa)) folds into the PPIase FKBP-type domain. TPR repeat units lie at residues 178–211 (VPVL…LRNL), 230–263 (NTLI…HPGI), and 264–297 (VKAY…EPSM). Residues 328-384 (SQGATQPPAEPPTEPPAQSSTEPPAEPPPAPSAELSAGPPAETATEPPPSPGHSLQH) form a disordered region. The span at 359 to 372 (SAELSAGPPAETAT) shows a compositional bias: low complexity.

In terms of assembly, interacts with NUB1.

It localises to the cytoplasm. The protein resides in the nucleus. Functionally, may be important in protein trafficking and/or protein folding and stabilization. This Pan paniscus (Pygmy chimpanzee) protein is Aryl-hydrocarbon-interacting protein-like 1 (AIPL1).